The chain runs to 778 residues: Arf-GAP with coiled-coil, ANK repeat and PH domain-containing protein 2 (778 aa).

Positions 1–226 constitute a BAR domain; it reads MKMTVDFEEC…MKDLGAQLDR (226 aa). One can recognise a PH domain in the interval 266 to 361; it reads GIVMEGYLFK…WIKAVQTSIA (96 aa). Residues 371–391 form a disordered region; it reads SEKLDKKSSPSTGSLDSGNES. The segment covering 379–388 has biased composition (polar residues); the sequence is SPSTGSLDSG. Phosphoserine occurs at positions 384 and 387. In terms of domain architecture, Arf-GAP spans 399–520; it reads ESALQRVQCV…KFVDKYSVSS (122 aa). The C4-type zinc-finger motif lies at 414 to 437; that stretch reads CCDCGLADPRWASINLGITLCIEC. The tract at residues 518 to 596 is disordered; sequence VSSSPPEQEK…EPEGERQDSS (79 aa). The residue at position 521 (S521) is a Phosphoserine. Positions 524 to 539 are enriched in basic and acidic residues; it reads EQEKKVVSKDSEEKRL. The span at 550-569 shows a compositional bias: polar residues; sequence VRTSIQSSVKSNDSGIQQSS. Phosphoserine occurs at positions 581 and 584. ANK repeat units follow at residues 640–669, 673–702, and 706–735; these read NKAT…NVNQ, QGRG…NQHA, and EGKD…NEEM. Phosphotyrosine is present on Y742. The residue at position 775 (S775) is a Phosphoserine.

In terms of assembly, interacts with RAB35 (GTP-bound form); the interaction is direct and probably recruits ACAP2 to membranes. Interacts with MICALL1; the interaction is indirect through RAB35.

The protein resides in the endosome membrane. It localises to the cell membrane. Its activity is regulated as follows. GAP activity stimulated by phosphatidylinositol 4,5-bisphosphate (PIP2) and phosphatidic acid. Functionally, GTPase-activating protein (GAP) for ADP ribosylation factor 6 (ARF6). Doesn't show GAP activity for RAB35. The polypeptide is Arf-GAP with coiled-coil, ANK repeat and PH domain-containing protein 2 (ACAP2) (Oryctolagus cuniculus (Rabbit)).